A 382-amino-acid polypeptide reads, in one-letter code: Histidinol-phosphate aminotransferase (382 aa).

Residues 1–24 (MTSAPRPRPTLDDLPLREDLRGKS) are disordered. Over residues 9-22 (PTLDDLPLREDLRG) the composition is skewed to basic and acidic residues. Lys-233 carries the post-translational modification N6-(pyridoxal phosphate)lysine.

The protein belongs to the class-II pyridoxal-phosphate-dependent aminotransferase family. Histidinol-phosphate aminotransferase subfamily. In terms of assembly, homodimer. It depends on pyridoxal 5'-phosphate as a cofactor.

The enzyme catalyses L-histidinol phosphate + 2-oxoglutarate = 3-(imidazol-4-yl)-2-oxopropyl phosphate + L-glutamate. The protein operates within amino-acid biosynthesis; L-histidine biosynthesis; L-histidine from 5-phospho-alpha-D-ribose 1-diphosphate: step 7/9. The chain is Histidinol-phosphate aminotransferase from Mycobacterium ulcerans (strain Agy99).